The chain runs to 328 residues: Tryptophan--tRNA ligase (328 aa).

Residues 10-12 (QAT) and 18-19 (GN) each bind ATP. A 'HIGH' region motif is present at residues 11 to 19 (ATGSLHLGN). Asp134 contacts L-tryptophan. Residues 146 to 148 (GED), Ile186, and 195 to 199 (KMSKS) each bind ATP. A 'KMSKS' region motif is present at residues 195 to 199 (KMSKS).

Belongs to the class-I aminoacyl-tRNA synthetase family. In terms of assembly, homodimer.

Its subcellular location is the cytoplasm. The enzyme catalyses tRNA(Trp) + L-tryptophan + ATP = L-tryptophyl-tRNA(Trp) + AMP + diphosphate + H(+). Its function is as follows. Catalyzes the attachment of tryptophan to tRNA(Trp). This is Tryptophan--tRNA ligase from Rickettsia bellii (strain RML369-C).